A 312-amino-acid polypeptide reads, in one-letter code: uncharacterized protein (312 aa).

Disordered regions lie at residues 1–26 and 45–106; these read MQKD…AMVA and GNLQ…LPSG. Positions 8–17 are enriched in basic residues; the sequence is RFQRNKKKIN. Residues 68–77 show a composition bias toward basic and acidic residues; it reads NGKRNGDKVR. The span at 85–103 shows a compositional bias: polar residues; sequence GHSSYAGSRISGGNSNSHL.

This is an uncharacterized protein from Schizosaccharomyces pombe (strain 972 / ATCC 24843) (Fission yeast).